The primary structure comprises 263 residues: Ribosomal RNA large subunit methyltransferase E (263 aa).

5 residues coordinate S-adenosyl-L-methionine: Gly48, Trp50, Asp68, Asp88, and Asp118. Lys158 acts as the Proton acceptor in catalysis. A TRAM domain is found at 205 to 263; the sequence is PVREGDIVEATIEDIGEEGDGIAKVENFTVFVSGVEDGETVEVRIDDVKPRYAFAEPVE.

It belongs to the class I-like SAM-binding methyltransferase superfamily. RNA methyltransferase RlmE family.

Its subcellular location is the cytoplasm. It catalyses the reaction uridine(2552) in 23S rRNA + S-adenosyl-L-methionine = 2'-O-methyluridine(2552) in 23S rRNA + S-adenosyl-L-homocysteine + H(+). Its function is as follows. Specifically methylates the uridine in position 2552 of 23S rRNA at the 2'-O position of the ribose in the fully assembled 50S ribosomal subunit. The sequence is that of Ribosomal RNA large subunit methyltransferase E from Haloarcula marismortui (strain ATCC 43049 / DSM 3752 / JCM 8966 / VKM B-1809) (Halobacterium marismortui).